The sequence spans 186 residues: Elongation factor P (186 aa).

Belongs to the elongation factor P family.

Its subcellular location is the cytoplasm. It functions in the pathway protein biosynthesis; polypeptide chain elongation. In terms of biological role, involved in peptide bond synthesis. Stimulates efficient translation and peptide-bond synthesis on native or reconstituted 70S ribosomes in vitro. Probably functions indirectly by altering the affinity of the ribosome for aminoacyl-tRNA, thus increasing their reactivity as acceptors for peptidyl transferase. The chain is Elongation factor P from Shewanella baltica (strain OS223).